A 131-amino-acid chain; its full sequence is Small ribosomal subunit protein bS6 (131 aa).

Positions 100–131 (SPMVKAKDERRERREDFANETSDDADAGDSEE) are disordered. Residues 104 to 116 (KAKDERRERREDF) show a composition bias toward basic and acidic residues. Positions 120–131 (TSDDADAGDSEE) are enriched in acidic residues.

It belongs to the bacterial ribosomal protein bS6 family.

In terms of biological role, binds together with bS18 to 16S ribosomal RNA. In Erwinia tasmaniensis (strain DSM 17950 / CFBP 7177 / CIP 109463 / NCPPB 4357 / Et1/99), this protein is Small ribosomal subunit protein bS6.